The following is a 739-amino-acid chain: MIPNDVRITPELIAEHGLKPDEYQRILDLIGREPTLTELGIFSAMWNEHCSYKSSKKWLRTLPTTGPRVICGPGENAGVVDIGDGQAIIFKMESHNHPSYIEPHEGAATGVGGILRDVFTMGARPVAALNALRFGAPDHPRTRHIVSGVVAGIGGYGNSFGVPTIGGEVNFDPSYNGNCLVNAFAAGLADADKIFYSEAKGVGLPIVYLGSKTGRDGIHGATMASAEFGENSEEKRPTVQIGDPFSEKLLLEACLELMASGAVIAIQDMGAAGLTCSAVEMGAKGDLGVELDLDKVPCREDGMTAYEMMLSESQERMLMVLDPAKEKEAEAIFVKWGLDFAIIGKTTDDLRFRIKRHGQVMADLPIKDLGDQAPEYDRPWIAPVKPEPLDPSSVPAPNNIGEILVRMLGLPDMCSRRWVWEQYDHLIQGNTAIGPGGDAAVIRVERGPKGLAFTLDVTPRYCAADPREGGKQAVAECWRNLTAVGAEPLAITDNLNFGNPEKPDIMGQFVGCIEGIGDACRALDFPVVSGNVSLYNETNGKGILPTPAIGAVGLLDNFEERVTIAFKAEGEAIVLIGETKGHLGQSIYLRDIAGKTDDRSAPPPVDLAVERRNGDFVRAEIRAGRTTAVHDISDGGILVALAEMAMAGGIGASVKPETALPLHAWAFGEDQARYLVTMPENEAKAFIARAEKAGIPATRLGTTGGNELTLNGGVPISLAGIKAAHEGWLPAYMAAGAEL.

Histidine 49 is a catalytic residue. The ATP site is built by tyrosine 52 and lysine 91. Glutamate 93 contributes to the Mg(2+) binding site. Residues serine 94–histidine 97 and arginine 116 contribute to the substrate site. Histidine 95 acts as the Proton acceptor in catalysis. Mg(2+) is bound at residue aspartate 117. A substrate-binding site is contributed by glutamine 240. Position 268 (aspartate 268) interacts with Mg(2+). Glutamate 312 to glutamine 314 lines the substrate pocket. Aspartate 493 and glycine 530 together coordinate ATP. Asparagine 531 provides a ligand contact to Mg(2+). Residue serine 533 coordinates substrate.

It belongs to the FGAMS family. In terms of assembly, monomer. Part of the FGAM synthase complex composed of 1 PurL, 1 PurQ and 2 PurS subunits.

The protein localises to the cytoplasm. It carries out the reaction N(2)-formyl-N(1)-(5-phospho-beta-D-ribosyl)glycinamide + L-glutamine + ATP + H2O = 2-formamido-N(1)-(5-O-phospho-beta-D-ribosyl)acetamidine + L-glutamate + ADP + phosphate + H(+). It participates in purine metabolism; IMP biosynthesis via de novo pathway; 5-amino-1-(5-phospho-D-ribosyl)imidazole from N(2)-formyl-N(1)-(5-phospho-D-ribosyl)glycinamide: step 1/2. In terms of biological role, part of the phosphoribosylformylglycinamidine synthase complex involved in the purines biosynthetic pathway. Catalyzes the ATP-dependent conversion of formylglycinamide ribonucleotide (FGAR) and glutamine to yield formylglycinamidine ribonucleotide (FGAM) and glutamate. The FGAM synthase complex is composed of three subunits. PurQ produces an ammonia molecule by converting glutamine to glutamate. PurL transfers the ammonia molecule to FGAR to form FGAM in an ATP-dependent manner. PurS interacts with PurQ and PurL and is thought to assist in the transfer of the ammonia molecule from PurQ to PurL. The chain is Phosphoribosylformylglycinamidine synthase subunit PurL from Parvibaculum lavamentivorans (strain DS-1 / DSM 13023 / NCIMB 13966).